The primary structure comprises 779 residues: Aconitate hydratase, mitochondrial (779 aa).

The N-terminal 28 residues, 1-28 (MIAMDRIARIPIARWTSRAFRVSAAARQ), are a transit peptide targeting the mitochondrion. Substrate contacts are provided by residues Q97 and 190–192 (DSH). C383, C446, and C449 together coordinate [4Fe-4S] cluster. Substrate-binding positions include R472, R477, R605, and 668–669 (SR).

The protein belongs to the aconitase/IPM isomerase family. As to quaternary structure, monomer. [4Fe-4S] cluster serves as cofactor.

The protein resides in the mitochondrion. It carries out the reaction citrate = D-threo-isocitrate. The protein operates within carbohydrate metabolism; tricarboxylic acid cycle; isocitrate from oxaloacetate: step 2/2. In terms of biological role, catalyzes the isomerization of citrate to isocitrate via cis-aconitate. This is Aconitate hydratase, mitochondrial from Gracilaria gracilis (Red alga).